Reading from the N-terminus, the 319-residue chain is Acetyl-coenzyme A carboxylase carboxyl transferase subunit alpha (319 aa).

A CoA carboxyltransferase C-terminal domain is found at 35–296; it reads NLDEEVQRLR…KAQLLADLSD (262 aa).

The protein belongs to the AccA family. In terms of assembly, acetyl-CoA carboxylase is a heterohexamer composed of biotin carboxyl carrier protein (AccB), biotin carboxylase (AccC) and two subunits each of ACCase subunit alpha (AccA) and ACCase subunit beta (AccD).

The protein resides in the cytoplasm. The catalysed reaction is N(6)-carboxybiotinyl-L-lysyl-[protein] + acetyl-CoA = N(6)-biotinyl-L-lysyl-[protein] + malonyl-CoA. The protein operates within lipid metabolism; malonyl-CoA biosynthesis; malonyl-CoA from acetyl-CoA: step 1/1. In terms of biological role, component of the acetyl coenzyme A carboxylase (ACC) complex. First, biotin carboxylase catalyzes the carboxylation of biotin on its carrier protein (BCCP) and then the CO(2) group is transferred by the carboxyltransferase to acetyl-CoA to form malonyl-CoA. In Yersinia enterocolitica serotype O:8 / biotype 1B (strain NCTC 13174 / 8081), this protein is Acetyl-coenzyme A carboxylase carboxyl transferase subunit alpha.